Consider the following 278-residue polypeptide: Formamidopyrimidine-DNA glycosylase (278 aa).

Catalysis depends on Pro2, which acts as the Schiff-base intermediate with DNA. Residue Glu3 is the Proton donor of the active site. Lys57 (proton donor; for beta-elimination activity) is an active-site residue. The DNA site is built by His90, Arg109, and Lys150. The FPG-type zinc-finger motif lies at 235 to 269 (QVYGRAGEPCRQCGHPIEIAKHGQRSTFFCRHCQF). Catalysis depends on Arg259, which acts as the Proton donor; for delta-elimination activity.

The protein belongs to the FPG family. As to quaternary structure, monomer. Zn(2+) serves as cofactor.

The enzyme catalyses Hydrolysis of DNA containing ring-opened 7-methylguanine residues, releasing 2,6-diamino-4-hydroxy-5-(N-methyl)formamidopyrimidine.. It catalyses the reaction 2'-deoxyribonucleotide-(2'-deoxyribose 5'-phosphate)-2'-deoxyribonucleotide-DNA = a 3'-end 2'-deoxyribonucleotide-(2,3-dehydro-2,3-deoxyribose 5'-phosphate)-DNA + a 5'-end 5'-phospho-2'-deoxyribonucleoside-DNA + H(+). Functionally, involved in base excision repair of DNA damaged by oxidation or by mutagenic agents. Acts as a DNA glycosylase that recognizes and removes damaged bases. Has a preference for oxidized purines, such as 7,8-dihydro-8-oxoguanine (8-oxoG). Has AP (apurinic/apyrimidinic) lyase activity and introduces nicks in the DNA strand. Cleaves the DNA backbone by beta-delta elimination to generate a single-strand break at the site of the removed base with both 3'- and 5'-phosphates. This is Formamidopyrimidine-DNA glycosylase from Yersinia pestis (strain Pestoides F).